Here is a 490-residue protein sequence, read N- to C-terminus: ATP synthase subunit beta, chloroplastic (490 aa).

Residue 170-177 coordinates ATP; the sequence is GGAGVGKT.

Belongs to the ATPase alpha/beta chains family. As to quaternary structure, F-type ATPases have 2 components, CF(1) - the catalytic core - and CF(0) - the membrane proton channel. CF(1) has five subunits: alpha(3), beta(3), gamma(1), delta(1), epsilon(1). CF(0) has four main subunits: a(1), b(1), b'(1) and c(9-12).

The protein localises to the plastid. The protein resides in the chloroplast thylakoid membrane. It carries out the reaction ATP + H2O + 4 H(+)(in) = ADP + phosphate + 5 H(+)(out). Produces ATP from ADP in the presence of a proton gradient across the membrane. The catalytic sites are hosted primarily by the beta subunits. The polypeptide is ATP synthase subunit beta, chloroplastic (Ipomoea obscura (Obscure morning glory)).